Here is a 177-residue protein sequence, read N- to C-terminus: Inner membrane protein p22 (177 aa).

Topologically, residues 1–7 (MFNIKMT) are intravirion. The helical transmembrane segment at 8 to 28 (ISTLLIALIILVIIILVVFLY) threads the bilayer. Residues 29 to 177 (YKKQQPPKKV…IALPRNHKHA (149 aa)) are Virion surface-facing.

Belongs to the asfivirus inner membrane protein p22 family.

It is found in the virion membrane. The protein localises to the host cell membrane. This is Inner membrane protein p22 from Ornithodoros (relapsing fever ticks).